Here is a 523-residue protein sequence, read N- to C-terminus: Putative UDP-glucuronosyltransferase ugt-50 (523 aa).

The first 25 residues, 1 to 25, serve as a signal peptide directing secretion; it reads MHYSQMRWMFFCLTALLHGSFIVNA. N-linked (GlcNAc...) asparagine glycans are attached at residues Asn84, Asn248, Asn283, and Asn487. The helical transmembrane segment at 490–508 threads the bilayer; it reads IIEHNHLDLFFYLCIISLL.

It belongs to the UDP-glycosyltransferase family.

The protein resides in the membrane. It carries out the reaction glucuronate acceptor + UDP-alpha-D-glucuronate = acceptor beta-D-glucuronoside + UDP + H(+). This chain is Putative UDP-glucuronosyltransferase ugt-50 (ugt-50), found in Caenorhabditis elegans.